The sequence spans 555 residues: Sulfite reductase [ferredoxin] 2 (555 aa).

The tract at residues 1–31 (MTTARPAKARNEGQWALGNREPLNPNEEMKQ) is disordered. Residues 69 to 161 (YTQREQGYDG…AVGLRTTEAC (93 aa)) constitute a cross-link (3'-(S-cysteinyl)-tyrosine (Tyr-Cys)). [4Fe-4S] cluster-binding residues include C417, C423, C463, and C467. C467 lines the siroheme pocket.

This sequence belongs to the nitrite and sulfite reductase 4Fe-4S domain family. As to quaternary structure, monomer. It depends on siroheme as a cofactor. [4Fe-4S] cluster serves as cofactor.

The enzyme catalyses hydrogen sulfide + 6 oxidized [2Fe-2S]-[ferredoxin] + 3 H2O = sulfite + 6 reduced [2Fe-2S]-[ferredoxin] + 7 H(+). Catalyzes the reduction of sulfite to sulfide, a step in the biosynthesis of sulfur-containing amino acids and cofactors. The protein is Sulfite reductase [ferredoxin] 2 (sir2) of Mycolicibacterium paratuberculosis (strain ATCC BAA-968 / K-10) (Mycobacterium paratuberculosis).